Here is a 70-residue protein sequence, read N- to C-terminus: MYSKILLYRSNVLFMNFFSVFVCTIGTLFLVFADVYVLASAFFQSKKEKETKFKHLHYQKRSCFFLANIH.

A helical membrane pass occupies residues 12-32 (VLFMNFFSVFVCTIGTLFLVF).

The protein resides in the membrane. This is an uncharacterized protein from Saccharomyces cerevisiae (strain ATCC 204508 / S288c) (Baker's yeast).